The chain runs to 180 residues: Large ribosomal subunit protein uL5 (180 aa).

It belongs to the universal ribosomal protein uL5 family. Part of the 50S ribosomal subunit; part of the 5S rRNA/L5/L18/L25 subcomplex. Contacts the 5S rRNA and the P site tRNA. Forms a bridge to the 30S subunit in the 70S ribosome.

Functionally, this is one of the proteins that bind and probably mediate the attachment of the 5S RNA into the large ribosomal subunit, where it forms part of the central protuberance. In the 70S ribosome it contacts protein S13 of the 30S subunit (bridge B1b), connecting the 2 subunits; this bridge is implicated in subunit movement. Contacts the P site tRNA; the 5S rRNA and some of its associated proteins might help stabilize positioning of ribosome-bound tRNAs. The protein is Large ribosomal subunit protein uL5 of Synechocystis sp. (strain ATCC 27184 / PCC 6803 / Kazusa).